We begin with the raw amino-acid sequence, 143 residues long: Putative pre-16S rRNA nuclease (143 aa).

Belongs to the YqgF nuclease family.

The protein resides in the cytoplasm. Could be a nuclease involved in processing of the 5'-end of pre-16S rRNA. This Lactococcus lactis subsp. lactis (strain IL1403) (Streptococcus lactis) protein is Putative pre-16S rRNA nuclease (ybeB).